A 72-amino-acid chain; its full sequence is Bradykinin-potentiating peptide BmKbpp (72 aa).

An N-terminal signal peptide occupies residues Met1 to Ser22. A propeptide spanning residues Arg70 to Arg72 is cleaved from the precursor.

Belongs to the non-disulfide-bridged peptide (NDBP) superfamily. Long chain multifunctional peptide (group 2) family. In terms of tissue distribution, expressed by the venom gland.

Its subcellular location is the secreted. Functionally, amphipathic peptide that shows bradykinin potentiating activity and antimicrobial activities against bacteria and fungi. Has higher antibacterial activities against Gram-negative than against Gram-positive bacteria. Also inhibits NADPH oxidase-dependent superoxide production (IC(50) is 0.4 uM on granulocytes stimulated with PMA, IC(50) is 0.51 uM on HL-60 cells undifferentiated and IC(50) is 0.53 uM on HL-60 cells treated with DMSO). The C-terminal peptide shows a higher bradykinin potentiating activity than the complete peptide. In Olivierus martensii (Manchurian scorpion), this protein is Bradykinin-potentiating peptide BmKbpp.